The chain runs to 161 residues: Nucleotide-binding protein xcc-b100_3818 (161 aa).

This sequence belongs to the YajQ family.

Functionally, nucleotide-binding protein. This chain is Nucleotide-binding protein xcc-b100_3818, found in Xanthomonas campestris pv. campestris (strain B100).